The following is a 424-amino-acid chain: Fasciclin-like arabinogalactan protein 1 (424 aa).

Positions 1–24 (MAKKMSSLIIIFNILLLLTTQTHA) are cleaved as a signal peptide. FAS1 domains lie at 25–170 (HNVT…SRVL) and 184–323 (EMNL…DKVL). N-linked (GlcNAc...) asparagine glycosylation is found at N26, N128, N160, N186, and N240. A disordered region spans residues 338 to 393 (APAPAPEDGDVADSPKAAKGKAKGKKKKAAPSPDNDPFGDSDSPAEGPDGEADDAT). A compositionally biased stretch (basic residues) spans 355 to 366 (AKGKAKGKKKKA). Residue D396 is the site of GPI-anchor amidated aspartate attachment. Positions 397–424 (AGAVRIIGGAKAGLVVSLLCLFASSWLL) are cleaved as a propeptide — removed in mature form.

The protein belongs to the fasciclin-like AGP family. As to expression, preferentially expressed in flowers.

It is found in the secreted. The protein resides in the extracellular space. It localises to the apoplast. The protein localises to the cell membrane. May be a cell surface adhesion protein. The protein is Fasciclin-like arabinogalactan protein 1 (FLA1) of Arabidopsis thaliana (Mouse-ear cress).